The sequence spans 211 residues: Ribosomal RNA small subunit methyltransferase G (211 aa).

Residues glycine 73, 125–126 (IE), and arginine 141 contribute to the S-adenosyl-L-methionine site.

The protein belongs to the methyltransferase superfamily. RNA methyltransferase RsmG family.

It localises to the cytoplasm. It catalyses the reaction guanosine(527) in 16S rRNA + S-adenosyl-L-methionine = N(7)-methylguanosine(527) in 16S rRNA + S-adenosyl-L-homocysteine. Specifically methylates the N7 position of guanine in position 527 of 16S rRNA. The protein is Ribosomal RNA small subunit methyltransferase G of Methylobacterium radiotolerans (strain ATCC 27329 / DSM 1819 / JCM 2831 / NBRC 15690 / NCIMB 10815 / 0-1).